Reading from the N-terminus, the 616-residue chain is Dihydroxy-acid dehydratase (616 aa).

Residue Asp-81 participates in Mg(2+) binding. Cys-122 serves as a coordination point for [2Fe-2S] cluster. Mg(2+) is bound by residues Asp-123 and Lys-124. The residue at position 124 (Lys-124) is an N6-carboxylysine. Cys-196 lines the [2Fe-2S] cluster pocket. Glu-496 is a Mg(2+) binding site. Catalysis depends on Ser-522, which acts as the Proton acceptor.

This sequence belongs to the IlvD/Edd family. As to quaternary structure, homodimer. [2Fe-2S] cluster serves as cofactor. Requires Mg(2+) as cofactor.

The enzyme catalyses (2R)-2,3-dihydroxy-3-methylbutanoate = 3-methyl-2-oxobutanoate + H2O. It carries out the reaction (2R,3R)-2,3-dihydroxy-3-methylpentanoate = (S)-3-methyl-2-oxopentanoate + H2O. It participates in amino-acid biosynthesis; L-isoleucine biosynthesis; L-isoleucine from 2-oxobutanoate: step 3/4. It functions in the pathway amino-acid biosynthesis; L-valine biosynthesis; L-valine from pyruvate: step 3/4. Functions in the biosynthesis of branched-chain amino acids. Catalyzes the dehydration of (2R,3R)-2,3-dihydroxy-3-methylpentanoate (2,3-dihydroxy-3-methylvalerate) into 2-oxo-3-methylpentanoate (2-oxo-3-methylvalerate) and of (2R)-2,3-dihydroxy-3-methylbutanoate (2,3-dihydroxyisovalerate) into 2-oxo-3-methylbutanoate (2-oxoisovalerate), the penultimate precursor to L-isoleucine and L-valine, respectively. This chain is Dihydroxy-acid dehydratase, found in Streptomyces griseus subsp. griseus (strain JCM 4626 / CBS 651.72 / NBRC 13350 / KCC S-0626 / ISP 5235).